The chain runs to 1415 residues: DNA-directed RNA polymerase subunit beta' (1415 aa).

Cys70, Cys72, Cys85, and Cys88 together coordinate Zn(2+). 3 residues coordinate Mg(2+): Asp461, Asp463, and Asp465. Positions 820, 894, 901, and 904 each coordinate Zn(2+). Residues 1382–1415 (ERERAQAIADEEQSLFIEPPPVVQATTEGEGDNA) are disordered.

Belongs to the RNA polymerase beta' chain family. The RNAP catalytic core consists of 2 alpha, 1 beta, 1 beta' and 1 omega subunit. When a sigma factor is associated with the core the holoenzyme is formed, which can initiate transcription. It depends on Mg(2+) as a cofactor. Requires Zn(2+) as cofactor.

It carries out the reaction RNA(n) + a ribonucleoside 5'-triphosphate = RNA(n+1) + diphosphate. DNA-dependent RNA polymerase catalyzes the transcription of DNA into RNA using the four ribonucleoside triphosphates as substrates. This Cupriavidus pinatubonensis (strain JMP 134 / LMG 1197) (Cupriavidus necator (strain JMP 134)) protein is DNA-directed RNA polymerase subunit beta'.